A 453-amino-acid polypeptide reads, in one-letter code: Sodium/alanine symporter AgcS (453 aa).

Topologically, residues 1-17 (MDFVSLVNTVNSFVWGP) are extracellular. Residues 18–32 (YMLVLLLGTGIFLTL) form a helical membrane-spanning segment. The Cytoplasmic segment spans residues 33–67 (RLGFMQIHTLPYALKLAFSKHQDETSEGDISHFQA). The helical transmembrane segment at 68-89 (LMTALAATIGTGNIAGVATAYV) threads the bilayer. Residue Thr75 participates in D-alanine binding. Residues Thr75 and Gly79 each coordinate L-alanine. Position 80 (Asn80) interacts with D-alanine. Topologically, residues 90–92 (LGG) are extracellular. The helical transmembrane segment at 93 to 111 (PGAIFWMWVTAFFGMATKY) threads the bilayer. At 112-148 (AEAVLAIKYRTVDDNGEMAGGPMYFLEKGLPDHGLGK) the chain is on the cytoplasmic side. The chain crosses the membrane as a helical span at residues 149–179 (ILGVAFAFFGAFAAFGIGNMVQTNSVADAVA). Gln170 contributes to the D-alanine binding site. An L-alanine-binding site is contributed by Gln170. Residues 180 to 186 (SNFGVDP) are Extracellular-facing. Residues 187–202 (LITGFVLAIFTAAVIL) form a helical membrane-spanning segment. The Cytoplasmic segment spans residues 203 to 206 (GGIK). A helical membrane pass occupies residues 207 to 233 (SIGKATGIIVPFMAVFYILAGLVILAM). Over 234–258 (NIGYIIPAFGTIFSSAFNFSAGFGA) the chain is Extracellular. Residues 259 to 274 (LIGTAIMWGVKRGVFS) traverse the membrane as a helical segment. D-alanine is bound at residue 273–274 (FS). 273–276 (FSNE) lines the L-alanine pocket. Residues 275-300 (NEAGLGSAPIAAAAAKTDHPGRQALV) are Cytoplasmic-facing. Residues 301-322 (SMTGTFLDTIVVCTITGLVLTI) traverse the membrane as a helical segment. Residues 323-350 (AGLKAFPGLTDLTGASLTAASFDALMPM) lie on the Extracellular side of the membrane. A helical membrane pass occupies residues 351–378 (GGLIVTIGLVFFAYSTVLGWSYYGEKCF). The Cytoplasmic segment spans residues 379–386 (EYLIGTKG). The helical transmembrane segment at 387 to 403 (IRLYRIAFVLVAFWGAT) threads the bilayer. Topologically, residues 404–408 (ASLPL) are extracellular. Residues 409-430 (VWNIADTLNGAMAIPNLIGLLL) form a helical membrane-spanning segment. Residues 431-453 (LSGVVVSETKAFNEIRKNEAKNA) are Cytoplasmic-facing.

The protein belongs to the alanine or glycine:cation symporter (AGCS) (TC 2.A.25) family.

Its subcellular location is the cell membrane. The catalysed reaction is D-alanine(in) + Na(+)(in) = D-alanine(out) + Na(+)(out). The enzyme catalyses L-alanine(in) + Na(+)(in) = L-alanine(out) + Na(+)(out). It catalyses the reaction glycine(in) + Na(+)(in) = glycine(out) + Na(+)(out). Functionally, catalyzes the sodium-dependent uptake of extracellular D-alanine and L-alanine. Can also transport glycine. Binds glycine and both enantiomers of alanine, while strictly excluding other amino acids. The protein is Sodium/alanine symporter AgcS of Methanococcus maripaludis (strain DSM 14266 / JCM 13030 / NBRC 101832 / S2 / LL).